The chain runs to 340 residues: DNA-directed RNA polymerase subunit alpha (340 aa).

Residues 1–233 are alpha N-terminal domain (alpha-NTD); that stretch reads MVREEVAVST…DLFIPFLHAE (233 aa). An alpha C-terminal domain (alpha-CTD) region spans residues 266–340; it reads KKEIALKCIF…GIDLPKNKRF (75 aa).

Belongs to the RNA polymerase alpha chain family. In plastids the minimal PEP RNA polymerase catalytic core is composed of four subunits: alpha, beta, beta', and beta''. When a (nuclear-encoded) sigma factor is associated with the core the holoenzyme is formed, which can initiate transcription.

It is found in the plastid. It localises to the chloroplast. It catalyses the reaction RNA(n) + a ribonucleoside 5'-triphosphate = RNA(n+1) + diphosphate. Functionally, DNA-dependent RNA polymerase catalyzes the transcription of DNA into RNA using the four ribonucleoside triphosphates as substrates. In Calycanthus floridus var. glaucus (Eastern sweetshrub), this protein is DNA-directed RNA polymerase subunit alpha.